Consider the following 301-residue polypeptide: Phospholipase A1 (301 aa).

Cysteines 4 and 87 form a disulfide. The Nucleophile role is filled by Ser137. The active-site Charge relay system is Asp165. 2 disulfides stabilise this stretch: Cys176–Cys181 and Cys219–Cys228. His230 acts as the Charge relay system in catalysis. 3 disulfide bridges follow: Cys245–Cys269, Cys246–Cys294, and Cys262–Cys267.

Belongs to the AB hydrolase superfamily. Lipase family. As to expression, expressed by the venom gland.

The protein localises to the secreted. It catalyses the reaction a 1,2-diacyl-sn-glycero-3-phosphocholine + H2O = a 2-acyl-sn-glycero-3-phosphocholine + a fatty acid + H(+). Functionally, catalyzes the hydrolysis of phosphatidylcholine with phospholipase A1 activity. May act as an allergen and induce hemolytic activity. In Vespa crabro (European hornet), this protein is Phospholipase A1.